The following is a 338-amino-acid chain: Tryptophan--tRNA ligase (338 aa).

ATP is bound by residues 11 to 13 and 19 to 20; these read QPS and GN. The 'HIGH' region signature appears at 12–20; it reads PSGELSIGN. D135 contacts L-tryptophan. Residues 147-149, V189, and 198-202 each bind ATP; these read GSD and KMSKS. The 'KMSKS' region motif lies at 198–202; that stretch reads KMSKS.

Belongs to the class-I aminoacyl-tRNA synthetase family. In terms of assembly, homodimer.

It is found in the cytoplasm. It catalyses the reaction tRNA(Trp) + L-tryptophan + ATP = L-tryptophyl-tRNA(Trp) + AMP + diphosphate + H(+). In terms of biological role, catalyzes the attachment of tryptophan to tRNA(Trp). This chain is Tryptophan--tRNA ligase, found in Vibrio vulnificus (strain YJ016).